The chain runs to 156 residues: Cell division protein SepF (156 aa).

Positions 17-44 (PETADYYEDQQPAQQAPAPVPTPAPTRS) are disordered.

It belongs to the SepF family. Homodimer. Interacts with FtsZ.

It localises to the cytoplasm. In terms of biological role, cell division protein that is part of the divisome complex and is recruited early to the Z-ring. Probably stimulates Z-ring formation, perhaps through the cross-linking of FtsZ protofilaments. Its function overlaps with FtsA. This Limosilactobacillus fermentum (strain NBRC 3956 / LMG 18251) (Lactobacillus fermentum) protein is Cell division protein SepF.